Consider the following 243-residue polypeptide: Uridylate kinase (243 aa).

15 to 18 (KISG) lines the ATP pocket. Glycine 57 contacts UMP. ATP contacts are provided by glycine 58 and arginine 62. Residues aspartate 77 and 138-145 (TGNPFFTT) each bind UMP. Threonine 165, phenylalanine 171, and aspartate 174 together coordinate ATP.

Belongs to the UMP kinase family. As to quaternary structure, homohexamer.

It is found in the cytoplasm. It carries out the reaction UMP + ATP = UDP + ADP. The protein operates within pyrimidine metabolism; CTP biosynthesis via de novo pathway; UDP from UMP (UMPK route): step 1/1. With respect to regulation, inhibited by UTP. In terms of biological role, catalyzes the reversible phosphorylation of UMP to UDP. In Blochmanniella floridana, this protein is Uridylate kinase.